A 208-amino-acid chain; its full sequence is Uracil phosphoribosyltransferase (208 aa).

5-phospho-alpha-D-ribose 1-diphosphate is bound by residues Arg-78, Arg-103, and 130-138; that span reads DPMLATGGS. Residues Ile-193 and 198–200 each bind uracil; that span reads GDA. Position 199 (Asp-199) interacts with 5-phospho-alpha-D-ribose 1-diphosphate.

The protein belongs to the UPRTase family. Requires Mg(2+) as cofactor.

The catalysed reaction is UMP + diphosphate = 5-phospho-alpha-D-ribose 1-diphosphate + uracil. It functions in the pathway pyrimidine metabolism; UMP biosynthesis via salvage pathway; UMP from uracil: step 1/1. Allosterically activated by GTP. Functionally, catalyzes the conversion of uracil and 5-phospho-alpha-D-ribose 1-diphosphate (PRPP) to UMP and diphosphate. The polypeptide is Uracil phosphoribosyltransferase (Pelobacter propionicus (strain DSM 2379 / NBRC 103807 / OttBd1)).